Consider the following 112-residue polypeptide: Integration host factor subunit alpha (112 aa).

Belongs to the bacterial histone-like protein family. As to quaternary structure, heterodimer of an alpha and a beta chain.

This protein is one of the two subunits of integration host factor, a specific DNA-binding protein that functions in genetic recombination as well as in transcriptional and translational control. The chain is Integration host factor subunit alpha from Rhizobium johnstonii (strain DSM 114642 / LMG 32736 / 3841) (Rhizobium leguminosarum bv. viciae).